Consider the following 418-residue polypeptide: tRNA wybutosine-synthesizing protein 2 (418 aa).

Residues Ser228, Lys235, 275-276, and 302-303 contribute to the S-adenosyl-L-methionine site; these read EI and EN.

The protein belongs to the class I-like SAM-binding methyltransferase superfamily. TRM5/TYW2 family.

The protein localises to the cytoplasm. It is found in the nucleus. The catalysed reaction is 4-demethylwyosine(37) in tRNA(Phe) + S-adenosyl-L-methionine = 4-demethyl-7-[(3S)-3-amino-3-carboxypropyl]wyosine(37) in tRNA(Phe) + S-methyl-5'-thioadenosine + H(+). The protein operates within tRNA modification; wybutosine-tRNA(Phe) biosynthesis. Its function is as follows. S-adenosyl-L-methionine-dependent transferase that acts as a component of the wybutosine biosynthesis pathway. Wybutosine is a hyper modified guanosine with a tricyclic base found at the 3'-position adjacent to the anticodon of eukaryotic phenylalanine tRNA. Catalyzes the transfer of the alpha-amino-alpha-carboxypropyl (acp) group from S-adenosyl-L-methionine to the C-7 position of 4-demethylwyosine (imG-14) to produce wybutosine-86. This Schizosaccharomyces pombe (strain 972 / ATCC 24843) (Fission yeast) protein is tRNA wybutosine-synthesizing protein 2 (trm12).